The following is an 823-amino-acid chain: Dolichyl-diphosphooligosaccharide--protein glycosyltransferase subunit STT3B (823 aa).

The segment at 1 to 58 is disordered; it reads MAEPSAPESKHKSSLNSSPWSGLMALGNSRHGHHGPGTQSASSAAAPKPGPPAGLSGG. N-acetylalanine is present on Ala2. At 2 to 41 the chain is on the cytoplasmic side; it reads AEPSAPESKHKSSLNSSPWSGLMALGNSRHGHHGPGTQSA. Phosphoserine is present on residues Ser13, Ser18, and Ser29. The chain crosses the membrane as a helical span at residues 42 to 83; that stretch reads SSAAAPKPGPPAGLSGGLSQPAGWQSLLSFTILFLAWLAGFS. The Lumenal segment spans residues 84–170; sequence SRLFAVIRFE…VHIRDVCVFL (87 aa). A DXD motif 1 motif is present at residues 98 to 100; the sequence is EFD. Asp100 contacts Mn(2+). A helical transmembrane segment spans residues 171-189; that stretch reads APTFSGLTSISTFLLTREL. The Cytoplasmic portion of the chain corresponds to 190–191; that stretch reads WN. Residues 192–209 form a helical membrane-spanning segment; that stretch reads QGAGLLAACFIAIVPGYI. Topologically, residues 210 to 220 are lumenal; the sequence is SRSVAGSFDNE. Asp218 and Glu220 together coordinate Mn(2+). Positions 218 to 220 match the DXD motif 2 motif; it reads DNE. The chain crosses the membrane as a helical span at residues 221 to 240; sequence GIAIFALQFTYYLWVKSVKT. The Cytoplasmic segment spans residues 241 to 242; sequence GS. A helical transmembrane segment spans residues 243 to 257; sequence VFWTMCCCLSYFYMV. At 258–262 the chain is on the lumenal side; sequence SAWGG. Residues 263–279 form a helical membrane-spanning segment; it reads YVFIINLIPLHVFVLLL. Topologically, residues 280 to 284 are cytoplasmic; sequence MQRYS. The helical transmembrane segment at 285-310 threads the bilayer; sequence KRVYIAYSTFYIVGLILSMQIPFVGF. Over 311–318 the chain is Lumenal; it reads QPIRTSEH. A helical membrane pass occupies residues 319–338; the sequence is MAAAGVFALLQAYAFLQYLR. The Cytoplasmic segment spans residues 339 to 347; the sequence is DRLTKQEFQ. The helical transmembrane segment at 348-368 threads the bilayer; sequence TLFFLGVSLAAGAVFLSVIYL. At 369-407 the chain is on the lumenal side; that stretch reads TYTGYIAPWSGRFYSLWDTGYAKIHIPIIASVSEHQPTT. The short motif at 399-402 is the SVSE motif element; the sequence is SVSE. The chain crosses the membrane as a helical span at residues 408 to 430; sequence WVSFFFDLHILVCTFPAGLWFCI. The Cytoplasmic portion of the chain corresponds to 431-436; that stretch reads KNINDE. The helical transmembrane segment at 437 to 453 threads the bilayer; it reads RVFVALYAISAVYFAGV. Over 454 to 457 the chain is Lumenal; it reads MVRL. Residue Arg456 coordinates dolichyl diphosphooligosaccharide. A helical transmembrane segment spans residues 458–479; that stretch reads MLTLTPVVCMLSAIAFSNVFEH. Residues 480-523 are Cytoplasmic-facing; sequence YLGDDMKRENPPVEDSSDEDDKRNPGNLYDKAGKVRKHVTEQEK. The tract at residues 487–526 is disordered; that stretch reads RENPPVEDSSDEDDKRNPGNLYDKAGKVRKHVTEQEKPEE. Phosphoserine is present on residues Ser495 and Ser496. Basic and acidic residues predominate over residues 517 to 526; it reads HVTEQEKPEE. A helical transmembrane segment spans residues 524-549; the sequence is PEEGLGPNIKSIVTMLMLMLLMMFAV. Over 550–823 the chain is Lumenal; that stretch reads HCTWVTSNAY…KGKKTSKKTV (274 aa). The segment at 601 to 603 is interacts with target acceptor peptide in protein substrate; that stretch reads WWD. A WWDYG motif motif is present at residues 601-605; sequence WWDYG. Residue Tyr606 coordinates dolichyl diphosphooligosaccharide. N-linked (GlcNAc...) asparagine glycans are attached at residues Asn613 and Asn620. An N-linked (GlcNAc...) (high mannose) asparagine glycan is attached at Asn624. The N-linked (GlcNAc...) asparagine glycan is linked to Asn638. A DK motif motif is present at residues 668–675; it reads DINKFLWM.

Belongs to the STT3 family. Component of the oligosaccharyltransferase (OST) complex. There are 2 OST complexes, OST-A and OST-B, which contain STT3A or STT3B as catalytic subunit, respectively. OST-A and OST-B contain common core subunits RPN1, RPN2, OST48, OST4, DAD1 and TMEM258, and OST-B contains either MAGT1 or TUSC3 as specific accessory subunit. Mg(2+) serves as cofactor. Requires Mn(2+) as cofactor.

The protein resides in the endoplasmic reticulum membrane. The enzyme catalyses a di-trans,poly-cis-dolichyl diphosphooligosaccharide + L-asparaginyl-[protein] = N(4)-(oligosaccharide-(1-&gt;4)-N-acetyl-beta-D-glucosaminyl-(1-&gt;4)-N-acetyl-beta-D-glucosaminyl)-L-asparaginyl-[protein] + a di-trans,poly-cis-dolichyl diphosphate + H(+). Its pathway is protein modification; protein glycosylation. Its function is as follows. Catalytic subunit of the oligosaccharyl transferase (OST) complex that catalyzes the initial transfer of a defined glycan (Glc(3)Man(9)GlcNAc(2) in eukaryotes) from the lipid carrier dolichol-pyrophosphate to an asparagine residue within an Asn-X-Ser/Thr consensus motif in nascent polypeptide chains, the first step in protein N-glycosylation. N-glycosylation occurs cotranslationally and the complex associates with the Sec61 complex at the channel-forming translocon complex that mediates protein translocation across the endoplasmic reticulum (ER). All subunits are required for a maximal enzyme activity. This subunit contains the active site and the acceptor peptide and donor lipid-linked oligosaccharide (LLO) binding pockets. STT3B is present in a small subset of OST complexes and mediates both cotranslational and post-translational N-glycosylation of target proteins: STT3B-containing complexes are required for efficient post-translational glycosylation and while they are less competent than STT3A-containing complexes for cotranslational glycosylation, they have the ability to mediate glycosylation of some nascent sites that are not accessible for STT3A. STT3B-containing complexes also act post-translationally and mediate modification of skipped glycosylation sites in unfolded proteins. Plays a role in ER-associated degradation (ERAD) pathway that mediates ubiquitin-dependent degradation of misfolded endoplasmic reticulum proteins by mediating N-glycosylation of unfolded proteins, which are then recognized by the ERAD pathway and targeted for degradation. This is Dolichyl-diphosphooligosaccharide--protein glycosyltransferase subunit STT3B from Mus musculus (Mouse).